The sequence spans 63 residues: Large ribosomal subunit protein bL28 (63 aa).

The protein belongs to the bacterial ribosomal protein bL28 family.

The polypeptide is Large ribosomal subunit protein bL28 (rpmB) (Selenomonas ruminantium).